Here is a 185-residue protein sequence, read N- to C-terminus: Ribosome-recycling factor (185 aa).

Belongs to the RRF family.

It localises to the cytoplasm. In terms of biological role, responsible for the release of ribosomes from messenger RNA at the termination of protein biosynthesis. May increase the efficiency of translation by recycling ribosomes from one round of translation to another. The protein is Ribosome-recycling factor of Streptococcus mutans serotype c (strain ATCC 700610 / UA159).